A 467-amino-acid chain; its full sequence is Mothers against decapentaplegic homolog 2 (467 aa).

At serine 2 the chain carries N-acetylserine. A Phosphothreonine; by MAPK3 modification is found at threonine 8. The 167-residue stretch at 10–176 (PVVKRLLGWK…YQRVETPVLP (167 aa)) folds into the MH1 domain. The residue at position 19 (lysine 19) is an N6-acetyllysine. 4 residues coordinate Zn(2+): cysteine 74, cysteine 149, cysteine 161, and histidine 166. The span at 207–217 (PAGIEPQSNYI) shows a compositional bias: polar residues. The interval 207–251 (PAGIEPQSNYIPETPPPGYISEDGETSDQQLNQSMDTGSPAELSP) is disordered. Residue threonine 220 is modified to Phosphothreonine. The short motif at 221–225 (PPPGY) is the PY-motif element. Polar residues predominate over residues 233–243 (SDQQLNQSMDT). Residue serine 240 is modified to Phosphoserine; by CAMK2. Phosphoserine occurs at positions 245, 250, 255, 458, 460, and 464. The MH2 domain maps to 274–467 (WCSIAYYELN…SPSVRCSSMS (194 aa)). Residues serine 465 and serine 467 each carry the phosphoserine; by TGFBR1 modification.

This sequence belongs to the dwarfin/SMAD family. Monomer; in the absence of TGF-beta. Heterodimer; in the presence of TGF-beta. Forms a heterodimer with co-SMAD, SMAD4, in the nucleus to form the transactivation complex SMAD2/SMAD4. Found in a complex with SMAD3 and TRIM33 upon addition of TGF-beta. Identified in a complex that contains at least ZNF451, SMAD2, SMAD3 and SMAD4. Interacts (via the MH2 domain) with ZFYVE9; may form trimers with the SMAD4 co-SMAD. Interacts with TAZ/WWRT1. Interacts with FOXH1. Interacts with SNW1. Interacts with CREB-binding protein (CBP) and EP300. Interacts with SNON. Interacts with ALK4/ACVR1B. Interacts with SKOR1. Interacts with SKOR2. Interacts with PRDM16. Interacts (via MH2 domain) with LEMD3. Interacts with RBPMS. Interacts with WWP1. Interacts (dephosphorylated form, via the MH1 and MH2 domains) with RANBP3 (via its C-terminal R domain); the interaction results in the export of dephosphorylated SMAD3 out of the nucleus and termination of the TGF-beta signaling. Interacts with PDPK1 (via PH domain). Interacts with DAB2; the interactions are enhanced upon TGF-beta stimulation. Interacts with USP15. Interacts with PPP5C. Interacts with LDLRAD4 (via the SMAD interaction motif). Interacts (via MH2 domain) with PMEPA1 (via the SMAD interaction motif). Interacts with ZFHX3. Interacts with ZNF451. Interacts with SMURF2 when phosphorylated on Ser-465/467. Interacts with PPM1A. Interacts with TGF-beta. Interacts with TGFBR1. Interacts with TGIF. Interacts with SMAD3 and TRIM33. Interacts with ZNF580. Interacts with NEDD4L in response to TGF-beta. Interacts with HGS. Interacts with AIP1. Interacts with WWP1. Interacts with PML. Interacts weakly with ZNF8. Interacts (when phosphorylated) with RNF111; RNF111 acts as an enhancer of the transcriptional responses by mediating ubiquitination and degradation of SMAD2 inhibitors. Interacts with YAP1 (when phosphorylated at 'Ser-127'). Interacts when phosphorylated with IPO7; the interaction facilitates translocation of SMAD2 to the nucleus. Interacts with MTMR4; negatively regulates TGF-beta signaling through SMAD2 dephosphorylation and retention in endosomes. In terms of processing, phosphorylated on one or several of Thr-220, Ser-245, Ser-250, and Ser-255. In response to TGF-beta, phosphorylated on Ser-465/467 by TGF-beta and activin type 1 receptor kinases. TGF-beta-induced Ser-465/467 phosphorylation declines progressively in a KMT5A-dependent manner. Able to interact with SMURF2 when phosphorylated on Ser-465/467, recruiting other proteins, such as SNON, for degradation. In response to decorin, the naturally occurring inhibitor of TGF-beta signaling, phosphorylated on Ser-240 by CaMK2. Phosphorylated by MAPK3 upon EGF stimulation; which increases transcriptional activity and stability, and is blocked by calmodulin. Phosphorylated by PDPK1. In response to TGF-beta, ubiquitinated by NEDD4L; which promotes its degradation. Monoubiquitinated, leading to prevent DNA-binding. Deubiquitination by USP15 alleviates inhibition and promotes activation of TGF-beta target genes. Ubiquitinated by RNF111, leading to its degradation: only SMAD2 proteins that are 'in use' are targeted by RNF111, RNF111 playing a key role in activating SMAD2 and regulating its turnover. Post-translationally, acetylated on Lys-19 by coactivators in response to TGF-beta signaling, which increases transcriptional activity. Isoform short: Acetylation increases DNA binding activity in vitro and enhances its association with target promoters in vivo. Acetylation in the nucleus by EP300 is enhanced by TGF-beta. As to expression, expressed at high levels in skeletal muscle, endothelial cells, heart and placenta.

It localises to the cytoplasm. Its subcellular location is the nucleus. Functionally, receptor-regulated SMAD (R-SMAD) that is an intracellular signal transducer and transcriptional modulator activated by TGF-beta (transforming growth factor) and activin type 1 receptor kinases. Binds the TRE element in the promoter region of many genes that are regulated by TGF-beta and, on formation of the SMAD2/SMAD4 complex, activates transcription. Promotes TGFB1-mediated transcription of odontoblastic differentiation genes in dental papilla cells. Positively regulates PDPK1 kinase activity by stimulating its dissociation from the 14-3-3 protein YWHAQ which acts as a negative regulator. May act as a tumor suppressor in colorectal carcinoma. This chain is Mothers against decapentaplegic homolog 2 (SMAD2), found in Homo sapiens (Human).